Here is a 310-residue protein sequence, read N- to C-terminus: Glutaminase (310 aa).

Substrate-binding residues include serine 66, asparagine 117, glutamate 161, asparagine 168, tyrosine 192, tyrosine 244, and valine 262.

This sequence belongs to the glutaminase family. As to quaternary structure, homotetramer.

It carries out the reaction L-glutamine + H2O = L-glutamate + NH4(+). In Desulfovibrio desulfuricans (strain ATCC 27774 / DSM 6949 / MB), this protein is Glutaminase.